Here is a 206-residue protein sequence, read N- to C-terminus: Venom allergen 5 2 (206 aa).

4 cysteine pairs are disulfide-bonded: cysteine 4–cysteine 16, cysteine 8–cysteine 104, cysteine 28–cysteine 96, and cysteine 172–cysteine 189. The 144-residue stretch at 48 to 191 (DEHNRFRQKV…MKSHYLVCNY (144 aa)) folds into the SCP domain.

It belongs to the CRISP family. Venom allergen 5-like subfamily. Expressed by the venom gland.

It localises to the secreted. The sequence is that of Venom allergen 5 2 from Polybia paulista (Neotropical social wasp).